We begin with the raw amino-acid sequence, 263 residues long: Interleukin-22 receptor subunit alpha-2 (263 aa).

Residues 1–21 (MMPKHCFLGFLISFFLTGVAG) form the signal peptide. 3 consecutive Fibronectin type-III domains span residues 26–68 (HESL…KIMF), 100–161 (GQRQ…TKID), and 162–263 (PPVM…VEIP). Residue N56 is glycosylated (N-linked (GlcNAc...) asparagine). C110 and C118 are joined by a disulfide. N166, N171, N192, and N209 each carry an N-linked (GlcNAc...) asparagine glycan. C238 and C259 are joined by a disulfide.

Belongs to the type II cytokine receptor family. In terms of tissue distribution, expressed in placenta, spleen, breast, skin and lung. Also detected in intestinal tract, testis, brain, heart and thymus. No expression found in prostate, bladder, kidney, ovary, muscle, bone marrow, liver and uterus. Isoform 1 is expressed only in placenta. Isoform 2 is expressed in placenta and breast and at lower level in spleen, skin, thymus and stomach.

It localises to the secreted. Isoform 2 is a receptor for IL22. Binds to IL22, prevents interaction with the functional IL-22R complex and blocks the activity of IL22 (in vitro). May play an important role as an IL22 antagonist in the regulation of inflammatory responses. Functionally, isoform 1 may play a role in establishing and maintaining successful pregnancy. This is Interleukin-22 receptor subunit alpha-2 (IL22RA2) from Homo sapiens (Human).